Here is a 417-residue protein sequence, read N- to C-terminus: UDP-N-acetylglucosamine 1-carboxyvinyltransferase (417 aa).

22 to 23 (KN) contacts phosphoenolpyruvate. Arginine 93 is a UDP-N-acetyl-alpha-D-glucosamine binding site. Cysteine 117 acts as the Proton donor in catalysis. Residue cysteine 117 is modified to 2-(S-cysteinyl)pyruvic acid O-phosphothioketal. UDP-N-acetyl-alpha-D-glucosamine is bound by residues 122–126 (RPVDQ), aspartate 304, and isoleucine 326.

The protein belongs to the EPSP synthase family. MurA subfamily.

The protein localises to the cytoplasm. It catalyses the reaction phosphoenolpyruvate + UDP-N-acetyl-alpha-D-glucosamine = UDP-N-acetyl-3-O-(1-carboxyvinyl)-alpha-D-glucosamine + phosphate. It participates in cell wall biogenesis; peptidoglycan biosynthesis. Cell wall formation. Adds enolpyruvyl to UDP-N-acetylglucosamine. The chain is UDP-N-acetylglucosamine 1-carboxyvinyltransferase from Neisseria meningitidis serogroup C (strain 053442).